The sequence spans 108 residues: Glutaredoxin-like protein YDR286C homolog (108 aa).

A disulfide bridge connects residues Cys-22 and Cys-25.

It belongs to the glutaredoxin family. YDR286C subfamily.

The protein is Glutaredoxin-like protein YDR286C homolog of Dictyostelium discoideum (Social amoeba).